The following is a 245-amino-acid chain: tRNA1(Val) (adenine(37)-N6)-methyltransferase (245 aa).

The protein belongs to the methyltransferase superfamily. tRNA (adenine-N(6)-)-methyltransferase family.

Its subcellular location is the cytoplasm. It carries out the reaction adenosine(37) in tRNA1(Val) + S-adenosyl-L-methionine = N(6)-methyladenosine(37) in tRNA1(Val) + S-adenosyl-L-homocysteine + H(+). In terms of biological role, specifically methylates the adenine in position 37 of tRNA(1)(Val) (anticodon cmo5UAC). In Salmonella typhi, this protein is tRNA1(Val) (adenine(37)-N6)-methyltransferase.